A 283-amino-acid polypeptide reads, in one-letter code: Ribosomal RNA small subunit methyltransferase A (283 aa).

The S-adenosyl-L-methionine site is built by asparagine 22, leucine 24, glycine 49, glutamate 70, and asparagine 113.

The protein belongs to the class I-like SAM-binding methyltransferase superfamily. rRNA adenine N(6)-methyltransferase family. RsmA subfamily.

Its subcellular location is the cytoplasm. It carries out the reaction adenosine(1518)/adenosine(1519) in 16S rRNA + 4 S-adenosyl-L-methionine = N(6)-dimethyladenosine(1518)/N(6)-dimethyladenosine(1519) in 16S rRNA + 4 S-adenosyl-L-homocysteine + 4 H(+). Functionally, specifically dimethylates two adjacent adenosines (A1518 and A1519) in the loop of a conserved hairpin near the 3'-end of 16S rRNA in the 30S particle. May play a critical role in biogenesis of 30S subunits. In Myxococcus xanthus (strain DK1622), this protein is Ribosomal RNA small subunit methyltransferase A.